A 1286-amino-acid polypeptide reads, in one-letter code: Ankyrin-repeat and fibronectin type III domain-containing 1 (1286 aa).

ANK repeat units lie at residues 274–303 (QGNE…PEEL) and 311–340 (EGLT…RESP). The Fibronectin type-III domain maps to 411 to 507 (VPANACLMVS…TTTPVCASPS (97 aa)). Residues 748 to 755 (GLYLGYLK) are highly conserved peptide sequence. The span at 999–1011 (SSHIDCLPSTSPS) shows a compositional bias: polar residues. Disordered regions lie at residues 999-1032 (SSHI…EEGC), 1086-1106 (KASM…DTDH), 1187-1207 (AEDP…RGLP), and 1242-1286 (AGQD…SSML). The span at 1260-1277 (SSLPSSTSSEMSPDPTSP) shows a compositional bias: low complexity.

In terms of tissue distribution, expressed in both the suprachiasmatic nucleus and dorsal medial hypothalamus.

Its function is as follows. May play a role in neuronal function. The sequence is that of Ankyrin-repeat and fibronectin type III domain-containing 1 from Mus musculus (Mouse).